Consider the following 122-residue polypeptide: Lycotoxin-Pa4a (122 aa).

The first 20 residues, 1-20, serve as a signal peptide directing secretion; that stretch reads MKLGIFFSVFFLAMIHSCLS. A propeptide spanning residues 21–47 is cleaved from the precursor; it reads ETNEDKNLESYFREDDLKALSFGEYAR. 4 cysteine pairs are disulfide-bonded: Cys-58–Cys-73, Cys-65–Cys-82, Cys-72–Cys-100, and Cys-84–Cys-98.

It belongs to the neurotoxin 19 (CSTX) family. Expressed by the venom gland.

It is found in the secreted. The protein localises to the target cell membrane. Its function is as follows. Potent antibacterial peptide with anti-inflammatory properties. Inhibits both Gram-negative and Gram-positive bacteria by disrupting both the outer membrane and the cytosolic membrane of bacteria. Also downregulates the expression of pro-inflammatory mediators (cyclooxygenase-2 (PTGS2/COX2), nitric oxide-induced synthase (NOS2), IL-1 beta (IL1B), TNF-alpha (TNF)) and upregulates the level of anti-inflammatory cytokine (IL10) by inactivating mitogen-activated protein kinase signaling in a lipopolysaccharide-stimulated murine macrophage cell line. In Pardosa astrigera (Wolf spider), this protein is Lycotoxin-Pa4a.